The primary structure comprises 274 residues: NADPH-dependent 7-cyano-7-deazaguanine reductase (274 aa).

Residue 80-82 (VES) participates in substrate binding. Residue 82-83 (SK) participates in NADPH binding. Cys181 serves as the catalytic Thioimide intermediate. Asp188 (proton donor) is an active-site residue. 220-221 (HE) serves as a coordination point for substrate. 249 to 250 (RG) contacts NADPH.

This sequence belongs to the GTP cyclohydrolase I family. QueF type 2 subfamily. In terms of assembly, homodimer.

The protein localises to the cytoplasm. The catalysed reaction is 7-aminomethyl-7-carbaguanine + 2 NADP(+) = 7-cyano-7-deazaguanine + 2 NADPH + 3 H(+). It functions in the pathway tRNA modification; tRNA-queuosine biosynthesis. Functionally, catalyzes the NADPH-dependent reduction of 7-cyano-7-deazaguanine (preQ0) to 7-aminomethyl-7-deazaguanine (preQ1). The protein is NADPH-dependent 7-cyano-7-deazaguanine reductase of Burkholderia lata (strain ATCC 17760 / DSM 23089 / LMG 22485 / NCIMB 9086 / R18194 / 383).